Here is a 288-residue protein sequence, read N- to C-terminus: ATP synthase gamma chain (288 aa).

It belongs to the ATPase gamma chain family. As to quaternary structure, F-type ATPases have 2 components, CF(1) - the catalytic core - and CF(0) - the membrane proton channel. CF(1) has five subunits: alpha(3), beta(3), gamma(1), delta(1), epsilon(1). CF(0) has three main subunits: a, b and c.

The protein resides in the cell membrane. Its function is as follows. Produces ATP from ADP in the presence of a proton gradient across the membrane. The gamma chain is believed to be important in regulating ATPase activity and the flow of protons through the CF(0) complex. The protein is ATP synthase gamma chain of Staphylococcus haemolyticus (strain JCSC1435).